A 174-amino-acid polypeptide reads, in one-letter code: Crossover junction endodeoxyribonuclease RuvC (174 aa).

Residues Asp-8, Glu-69, and Asp-141 contribute to the active site. Residues Asp-8, Glu-69, and Asp-141 each contribute to the Mg(2+) site.

This sequence belongs to the RuvC family. In terms of assembly, homodimer which binds Holliday junction (HJ) DNA. The HJ becomes 2-fold symmetrical on binding to RuvC with unstacked arms; it has a different conformation from HJ DNA in complex with RuvA. In the full resolvosome a probable DNA-RuvA(4)-RuvB(12)-RuvC(2) complex forms which resolves the HJ. It depends on Mg(2+) as a cofactor.

The protein resides in the cytoplasm. It carries out the reaction Endonucleolytic cleavage at a junction such as a reciprocal single-stranded crossover between two homologous DNA duplexes (Holliday junction).. The RuvA-RuvB-RuvC complex processes Holliday junction (HJ) DNA during genetic recombination and DNA repair. Endonuclease that resolves HJ intermediates. Cleaves cruciform DNA by making single-stranded nicks across the HJ at symmetrical positions within the homologous arms, yielding a 5'-phosphate and a 3'-hydroxyl group; requires a central core of homology in the junction. The consensus cleavage sequence is 5'-(A/T)TT(C/G)-3'. Cleavage occurs on the 3'-side of the TT dinucleotide at the point of strand exchange. HJ branch migration catalyzed by RuvA-RuvB allows RuvC to scan DNA until it finds its consensus sequence, where it cleaves and resolves the cruciform DNA. The sequence is that of Crossover junction endodeoxyribonuclease RuvC from Xanthomonas axonopodis pv. citri (strain 306).